Consider the following 3206-residue polypeptide: Highly reducing polyketide synthase ltbA (3206 aa).

The Ketosynthase family 3 (KS3) domain maps to proline 5–alanine 434. Active-site for beta-ketoacyl synthase activity residues include cysteine 179, histidine 314, and histidine 354. The segment covering proline 441 to aspartate 463 has biased composition (polar residues). Residues proline 441–asparagine 472 are disordered. The tract at residues valine 575 to threonine 890 is malonyl-CoA:ACP transacylase (MAT) domain. The interval histidine 958–aspartate 1098 is N-terminal hotdog fold. The segment at histidine 958–glutamate 1278 is dehydratase (DH) domain. A PKS/mFAS DH domain is found at histidine 958–aspartate 1284. Histidine 990 (proton acceptor; for dehydratase activity) is an active-site residue. The segment at aspartate 1128–aspartate 1284 is C-terminal hotdog fold. Residue aspartate 1193 is the Proton donor; for dehydratase activity of the active site. Residues glutamate 1450–histidine 1640 are methyltransferase (CMet) domain. The segment at leucine 1871 to glutamine 2185 is enoyl reductase (ER) domain. The tract at residues glycine 2208–glutamate 2395 is ketoreductase (KR) domain. Positions glutamate 2499–serine 2577 constitute a Carrier domain. An O-(pantetheine 4'-phosphoryl)serine modification is found at serine 2537. Residues isoleucine 2584–serine 2611 are disordered. Over residues glutamate 2598–proline 2610 the composition is skewed to basic and acidic residues. The segment at histidine 2994–glutamate 3206 is carnitine O-acyltransferase (cAT) domain.

Pantetheine 4'-phosphate is required as a cofactor.

It participates in secondary metabolite biosynthesis. In terms of biological role, highly reducing polyketide synthase; part of the gene cluster that mediates the biosynthesis of luteodienoside A, a glycosylated polyketide consisting of an unusual 1-O-beta-D-glucopyranosyl-myo-inositol (glucinol) ester of 3-hydroxy-2,2,4-trimethylocta-4,6-dienoic acid. LtbA produces the trimethylated polyketide chain from acetyl-CoA, malonyl-CoA and S-adenosylmethionine (SAM). The ltbA carnitine O-acyltransferase (cAT) domain then uses glucinol produced by the glycosyltransferase ltbB as an offloading substrate to release luteodienoside A. Furthermore, the PKS C-methyltransferase (CMeT) domain is capable of catalysing gem-dimethylation of the 3-hydroxy-2,2,4-trimethylocta-4,6-dienoic acid intermediate, without requiring reversible product release and recapture by the cAT domain. Since ltbA and ltbB are sufficient for the biosynthesis of luteodienoside A, the functions of the methyltransferase ltbC and the FAD-binding monooxygenase ltbD within the pathway remain obscur. This chain is Highly reducing polyketide synthase ltbA, found in Aspergillus luteorubrus.